Reading from the N-terminus, the 97-residue chain is Integration host factor subunit alpha (97 aa).

It belongs to the bacterial histone-like protein family. In terms of assembly, heterodimer of an alpha and a beta chain.

In terms of biological role, this protein is one of the two subunits of integration host factor, a specific DNA-binding protein that functions in genetic recombination as well as in transcriptional and translational control. This Colwellia psychrerythraea (strain 34H / ATCC BAA-681) (Vibrio psychroerythus) protein is Integration host factor subunit alpha.